Here is a 397-residue protein sequence, read N- to C-terminus: Argininosuccinate synthase (397 aa).

Ala-9–Ser-17 is an ATP binding site. Tyr-85 provides a ligand contact to L-citrulline. Gly-115 provides a ligand contact to ATP. L-aspartate-binding residues include Thr-117, Asn-121, and Asp-122. Residue Asn-121 coordinates L-citrulline. L-citrulline-binding residues include Arg-125, Ser-173, Glu-258, and Tyr-270.

It belongs to the argininosuccinate synthase family. Type 1 subfamily. Homotetramer.

Its subcellular location is the cytoplasm. The catalysed reaction is L-citrulline + L-aspartate + ATP = 2-(N(omega)-L-arginino)succinate + AMP + diphosphate + H(+). The protein operates within amino-acid biosynthesis; L-arginine biosynthesis; L-arginine from L-ornithine and carbamoyl phosphate: step 2/3. This Streptococcus suis (strain 05ZYH33) protein is Argininosuccinate synthase.